Consider the following 335-residue polypeptide: Glycerol-3-phosphate dehydrogenase [NAD(P)+] (335 aa).

Residues Ser-12, Trp-13, His-33, Arg-34, and Lys-108 each contribute to the NADPH site. Positions 108, 137, and 139 each coordinate sn-glycerol 3-phosphate. An NADPH-binding site is contributed by Ala-141. 5 residues coordinate sn-glycerol 3-phosphate: Lys-192, Asp-245, Ser-255, Arg-256, and Asn-257. Lys-192 (proton acceptor) is an active-site residue. Arg-256 contacts NADPH. Glu-282 lines the NADPH pocket.

It belongs to the NAD-dependent glycerol-3-phosphate dehydrogenase family.

It localises to the cytoplasm. The enzyme catalyses sn-glycerol 3-phosphate + NAD(+) = dihydroxyacetone phosphate + NADH + H(+). It catalyses the reaction sn-glycerol 3-phosphate + NADP(+) = dihydroxyacetone phosphate + NADPH + H(+). The protein operates within membrane lipid metabolism; glycerophospholipid metabolism. Functionally, catalyzes the reduction of the glycolytic intermediate dihydroxyacetone phosphate (DHAP) to sn-glycerol 3-phosphate (G3P), the key precursor for phospholipid synthesis. This is Glycerol-3-phosphate dehydrogenase [NAD(P)+] from Methylococcus capsulatus (strain ATCC 33009 / NCIMB 11132 / Bath).